We begin with the raw amino-acid sequence, 918 residues long: Eukaryotic translation initiation factor 3 subunit C (918 aa).

Positions 1-174 are disordered; the sequence is MSRFFKGGSS…EEEGRRVVKS (174 aa). A phosphoserine mark is found at Ser-10, Ser-12, Ser-16, Ser-19, and Ser-20. 3 stretches are compositionally biased toward acidic residues: residues 36–47, 54–67, and 79–128; these read SSSEEESSEEES, ESSE…ESEV, and EDSE…ESDE. The residue at position 667 (Thr-667) is a Phosphothreonine. The PCI domain maps to 681–856; it reads FHMHINLELL…GAIIFERVEI (176 aa). The tract at residues 879 to 918 is disordered; it reads KLYEQKTQHTNPQENRRRDKGGSVKRRNERTENRNRSDMN. A compositionally biased stretch (basic and acidic residues) spans 907–918; it reads ERTENRNRSDMN.

Belongs to the eIF-3 subunit C family. Component of the eukaryotic translation initiation factor 3 (eIF-3) complex. The eIF-3 complex appears to include tif32/eif3a, SPAC25G10.08/eif3b, tif33/eif3c, SPBC4C3.07/eif3f, tif35/eif3g and sum1/eif3i. This set of common subunits may also associate exclusively with either moe1/eif3d and int6/eif3e, or with SPAC821.05/eif3h and SPAC1751.03/eif3m. The eIF-3 complex may also include SPAC3A12.13c/eif3j.

The protein localises to the cytoplasm. Its function is as follows. Component of the eukaryotic translation initiation factor 3 (eIF-3) complex, which is involved in protein synthesis of a specialized repertoire of mRNAs and, together with other initiation factors, stimulates binding of mRNA and methionyl-tRNAi to the 40S ribosome. The eIF-3 complex specifically targets and initiates translation of a subset of mRNAs involved in cell proliferation. This Schizosaccharomyces pombe (strain 972 / ATCC 24843) (Fission yeast) protein is Eukaryotic translation initiation factor 3 subunit C (nip1).